Here is a 92-residue protein sequence, read N- to C-terminus: PqqA binding protein (92 aa).

It belongs to the PqqD family. In terms of assembly, monomer. Interacts with PqqE.

It functions in the pathway cofactor biosynthesis; pyrroloquinoline quinone biosynthesis. Functions as a PqqA binding protein and presents PqqA to PqqE, in the pyrroloquinoline quinone (PQQ) biosynthetic pathway. This is PqqA binding protein from Klebsiella pneumoniae (strain 342).